The chain runs to 306 residues: MKEDRVVFIFGPTAVGKSNILFHFPKNKAEIINVDSIQVYKEFNIASSKPSKNLMKHIKHHLVDFLDPEKDYTIGIFYEQALKIVKEIRQKKKIPIFVGGTAFYFKHLKDGFPSTPLVTSKIRIYVNNLLELKGKSYLLKELKNVDPIRFNMLNKNDIYRIKRSLEVYYQTGIPISQFQKKQNSEFKNIVIIGLKRSFEDLKTRISIRINEMLNSGLLSEIKGLFSKGYNENTPAFKGIGYNEFLLWKSRPCYGLNDIIGLINKNSFLYAKRQMTFFAKISDVLWLHPEDDLDNILNLIFKVDKEI.

11–18 (GPTAVGKS) serves as a coordination point for ATP. Residue 13 to 18 (TAVGKS) participates in substrate binding. Positions 35–38 (DSIQ) are interaction with substrate tRNA.

This sequence belongs to the IPP transferase family. As to quaternary structure, monomer. Requires Mg(2+) as cofactor.

The catalysed reaction is adenosine(37) in tRNA + dimethylallyl diphosphate = N(6)-dimethylallyladenosine(37) in tRNA + diphosphate. Catalyzes the transfer of a dimethylallyl group onto the adenine at position 37 in tRNAs that read codons beginning with uridine, leading to the formation of N6-(dimethylallyl)adenosine (i(6)A). In Borreliella burgdorferi (strain ZS7) (Borrelia burgdorferi), this protein is tRNA dimethylallyltransferase.